A 217-amino-acid chain; its full sequence is Uridylate kinase (217 aa).

Residue 6–10 (KLSGR) coordinates ATP. Residue Gly-38 participates in UMP binding. 2 residues coordinate ATP: Gly-39 and Arg-43. UMP is bound by residues Asp-60 and 107-113 (FQPGQST). 3 residues coordinate ATP: Asn-134, Tyr-139, and Asp-142.

The protein belongs to the UMP kinase family. As to quaternary structure, homohexamer.

It localises to the cytoplasm. The enzyme catalyses UMP + ATP = UDP + ADP. It functions in the pathway pyrimidine metabolism; CTP biosynthesis via de novo pathway; UDP from UMP (UMPK route): step 1/1. Inhibited by UTP. Functionally, catalyzes the reversible phosphorylation of UMP to UDP. This Pyrobaculum aerophilum (strain ATCC 51768 / DSM 7523 / JCM 9630 / CIP 104966 / NBRC 100827 / IM2) protein is Uridylate kinase.